We begin with the raw amino-acid sequence, 454 residues long: Histidine--tRNA ligase (454 aa).

This sequence belongs to the class-II aminoacyl-tRNA synthetase family. In terms of assembly, homodimer.

It is found in the cytoplasm. The catalysed reaction is tRNA(His) + L-histidine + ATP = L-histidyl-tRNA(His) + AMP + diphosphate + H(+). This is Histidine--tRNA ligase from Bacteroides fragilis (strain ATCC 25285 / DSM 2151 / CCUG 4856 / JCM 11019 / LMG 10263 / NCTC 9343 / Onslow / VPI 2553 / EN-2).